The sequence spans 222 residues: Uridine diphosphate glucose pyrophosphatase NUDT14 (222 aa).

The 169-residue stretch at 38-206 folds into the Nudix hydrolase domain; the sequence is KTHDSVTVLL…DIPKTLGVIF (169 aa). Positions 111 to 129 match the Nudix box motif; sequence PGLSLEEVACKEAWEECGY.

The protein belongs to the Nudix hydrolase family. As to quaternary structure, homodimer. It depends on Mg(2+) as a cofactor.

It localises to the cytoplasm. The catalysed reaction is UDP-sugar + H2O = UMP + alpha-D-aldose 1-phosphate.. Its function is as follows. Hydrolyzes UDP-glucose to glucose 1-phosphate and UMP and ADP-ribose to ribose 5-phosphate and AMP. The physiological substrate is probably UDP-glucose. Poor activity on other substrates such as ADP-glucose, CDP-glucose, GDP-glucose and GDP-mannose. The sequence is that of Uridine diphosphate glucose pyrophosphatase NUDT14 (NUDT14) from Homo sapiens (Human).